We begin with the raw amino-acid sequence, 373 residues long: Chaperone protein DnaJ (373 aa).

A J domain is found at 4 to 68 (NYYQILGVSK…QKRAAYDRLG (65 aa)). A CR-type zinc finger spans residues 136–214 (GIEKNISFSS…CHGMGRYHKQ (79 aa)). Residues C149, C152, C166, C169, C188, C191, C202, and C205 each contribute to the Zn(2+) site. 4 CXXCXGXG motif repeats span residues 149 to 156 (CDTCHGSG), 166 to 173 (CDACSGVG), 188 to 195 (CHKCQGNG), and 202 to 209 (CKKCHGMG).

Belongs to the DnaJ family. Homodimer. Zn(2+) serves as cofactor.

It localises to the cytoplasm. Participates actively in the response to hyperosmotic and heat shock by preventing the aggregation of stress-denatured proteins and by disaggregating proteins, also in an autonomous, DnaK-independent fashion. Unfolded proteins bind initially to DnaJ; upon interaction with the DnaJ-bound protein, DnaK hydrolyzes its bound ATP, resulting in the formation of a stable complex. GrpE releases ADP from DnaK; ATP binding to DnaK triggers the release of the substrate protein, thus completing the reaction cycle. Several rounds of ATP-dependent interactions between DnaJ, DnaK and GrpE are required for fully efficient folding. Also involved, together with DnaK and GrpE, in the DNA replication of plasmids through activation of initiation proteins. The chain is Chaperone protein DnaJ from Rickettsia africae (strain ESF-5).